The chain runs to 316 residues: MTSKNPIQKALYLAFERAQWSVLRDAVPMTLSEQDLENLRGINEKVSLSEVTDIYLPLSRLLNLIVKSKQQRGLVLDEFLGQKPSSSPYIISIAGSVAVGKSTTARILQALLRHWPEHPKVDLVTTDGFLYPLADLKRKGLLQRKGFPESYDMKMLVEFISAVKSGQAHVNAPIYSHVTYDRIRGQHQTVSQPDILILEGLNVLQTGLDSPVDIRRPFVSDFVDFSIYVDAEEHLLKQWYQERFLQFRKGAFSDEKSYFHHYASLTDDEANAIAAKIWDTINGPNLQLNIQPTRERAHLILQKGQDHLMSHVLLRK.

ATP is bound at residue 95–102 (GSVAVGKS).

It belongs to the prokaryotic pantothenate kinase family.

It is found in the cytoplasm. The enzyme catalyses (R)-pantothenate + ATP = (R)-4'-phosphopantothenate + ADP + H(+). Its pathway is cofactor biosynthesis; coenzyme A biosynthesis; CoA from (R)-pantothenate: step 1/5. In Shewanella sp. (strain ANA-3), this protein is Pantothenate kinase.